The following is a 139-amino-acid chain: ATP synthase epsilon chain (139 aa).

The interval 89–110 is disordered; the sequence is EARAEQARAEAEARRREAQSEH.

Belongs to the ATPase epsilon chain family. In terms of assembly, F-type ATPases have 2 components, CF(1) - the catalytic core - and CF(0) - the membrane proton channel. CF(1) has five subunits: alpha(3), beta(3), gamma(1), delta(1), epsilon(1). CF(0) has three main subunits: a, b and c.

It localises to the cell membrane. Functionally, produces ATP from ADP in the presence of a proton gradient across the membrane. In Chloroflexus aggregans (strain MD-66 / DSM 9485), this protein is ATP synthase epsilon chain.